The primary structure comprises 645 residues: Zinc finger and SCAN domain-containing protein 2 (645 aa).

Disordered stretches follow at residues 1–25 (MMAA…EEDR), 37–75 (DDSW…GPQG), and 193–230 (EMPE…HGEV). The region spanning 59-132 (SAGKGSPQEE…ALVEDLTQTL (74 aa)) is the SCAN box domain. Basic and acidic residues predominate over residues 199–214 (SAQHSDGESDFERDAG). 14 consecutive C2H2-type zinc fingers follow at residues 253 to 275 (YECP…ERTH), 281 to 303 (YKCD…QTTH), 309 to 331 (YKCR…QRIH), 337 to 359 (FQCA…QRTH), 365 to 387 (YSCP…QGIH), 393 to 415 (YECK…QRIH), 421 to 443 (YKCT…RRTH), 449 to 471 (YQCS…RRTH), 477 to 499 (YKCG…QGMH), 505 to 527 (YECL…QRIH), 533 to 555 (YKCS…QQTH), 561 to 583 (YKCL…QRAH), 589 to 611 (YRCP…QRIH), and 617 to 639 (YKCP…QRTH).

This sequence belongs to the krueppel C2H2-type zinc-finger protein family.

The protein resides in the nucleus. May be involved in transcriptional regulation during the post-meiotic stages of spermatogenesis. The sequence is that of Zinc finger and SCAN domain-containing protein 2 (ZSCAN2) from Pongo abelii (Sumatran orangutan).